We begin with the raw amino-acid sequence, 720 residues long: Putative fatty acid oxidation complex trifunctional enzyme (720 aa).

A 3-hydroxyacyl-CoA dehydrogenase region spans residues 1-384 (MQNEIKKVCV…SWHYGPFELL (384 aa)). Residues 453-720 (FVITTKMNSL…TIEKLQAIVG (268 aa)) form an enoyl-CoA hydratase/isomerase region.

This sequence in the N-terminal section; belongs to the 3-hydroxyacyl-CoA dehydrogenase family. It in the C-terminal section; belongs to the enoyl-CoA hydratase/isomerase family.

The catalysed reaction is a (3S)-3-hydroxyacyl-CoA + NAD(+) = a 3-oxoacyl-CoA + NADH + H(+). It carries out the reaction a (3S)-3-hydroxyacyl-CoA = a (2E)-enoyl-CoA + H2O. The enzyme catalyses a 4-saturated-(3S)-3-hydroxyacyl-CoA = a (3E)-enoyl-CoA + H2O. It catalyses the reaction a (3Z)-enoyl-CoA = a 4-saturated (2E)-enoyl-CoA. The catalysed reaction is a (3E)-enoyl-CoA = a 4-saturated (2E)-enoyl-CoA. The protein is Putative fatty acid oxidation complex trifunctional enzyme of Rickettsia prowazekii (strain Madrid E).